A 289-amino-acid chain; its full sequence is mRNA-capping enzyme small subunit (289 aa).

In terms of assembly, heterodimer of a large and a small subunit.

It is found in the virion. It carries out the reaction a 5'-end (5'-triphosphoguanosine)-ribonucleoside in mRNA + S-adenosyl-L-methionine = a 5'-end (N(7)-methyl 5'-triphosphoguanosine)-ribonucleoside in mRNA + S-adenosyl-L-homocysteine. Catalyzes the last reaction in the mRNA cap formation pathway. The polypeptide is mRNA-capping enzyme small subunit (Fowlpox virus (strain NVSL) (FPV)).